The primary structure comprises 49 residues: Large ribosomal subunit protein bL34 (49 aa).

It belongs to the bacterial ribosomal protein bL34 family.

In Sorangium cellulosum (strain So ce56) (Polyangium cellulosum (strain So ce56)), this protein is Large ribosomal subunit protein bL34.